Here is a 510-residue protein sequence, read N- to C-terminus: Histidine ammonia-lyase (510 aa).

Residues 143–145 (ASG) constitute a cross-link (5-imidazolinone (Ala-Gly)). At Ser144 the chain carries 2,3-didehydroalanine (Ser).

It belongs to the PAL/histidase family. In terms of processing, contains an active site 4-methylidene-imidazol-5-one (MIO), which is formed autocatalytically by cyclization and dehydration of residues Ala-Ser-Gly.

It is found in the cytoplasm. It carries out the reaction L-histidine = trans-urocanate + NH4(+). The protein operates within amino-acid degradation; L-histidine degradation into L-glutamate; N-formimidoyl-L-glutamate from L-histidine: step 1/3. This Shewanella piezotolerans (strain WP3 / JCM 13877) protein is Histidine ammonia-lyase.